The sequence spans 428 residues: Elongation factor 1-alpha (428 aa).

Positions 5-217 (KPHVNIVFIG…DQIPEPEKPV (213 aa)) constitute a tr-type G domain. The segment at 14-21 (GHVDHGKS) is G1. 14–21 (GHVDHGKS) contacts GTP. Position 21 (serine 21) interacts with Mg(2+). Residues 68 to 72 (GITID) are G2. The G3 stretch occupies residues 89-92 (DAPG). GTP-binding positions include 89–93 (DAPGH) and 144–147 (NKMD). The G4 stretch occupies residues 144–147 (NKMD). The interval 181 to 183 (SAW) is G5.

It belongs to the TRAFAC class translation factor GTPase superfamily. Classic translation factor GTPase family. EF-Tu/EF-1A subfamily.

Its subcellular location is the cytoplasm. It carries out the reaction GTP + H2O = GDP + phosphate + H(+). GTP hydrolase that promotes the GTP-dependent binding of aminoacyl-tRNA to the A-site of ribosomes during protein biosynthesis. The sequence is that of Elongation factor 1-alpha from Pyrococcus furiosus (strain ATCC 43587 / DSM 3638 / JCM 8422 / Vc1).